A 154-amino-acid chain; its full sequence is Large ribosomal subunit protein uL13 (154 aa).

This sequence belongs to the universal ribosomal protein uL13 family. In terms of assembly, part of the 50S ribosomal subunit.

In terms of biological role, this protein is one of the early assembly proteins of the 50S ribosomal subunit, although it is not seen to bind rRNA by itself. It is important during the early stages of 50S assembly. This Bradyrhizobium diazoefficiens (strain JCM 10833 / BCRC 13528 / IAM 13628 / NBRC 14792 / USDA 110) protein is Large ribosomal subunit protein uL13.